Here is a 231-residue protein sequence, read N- to C-terminus: Large ribosomal subunit protein uL1 (231 aa).

Belongs to the universal ribosomal protein uL1 family. In terms of assembly, part of the 50S ribosomal subunit.

Its function is as follows. Binds directly to 23S rRNA. The L1 stalk is quite mobile in the ribosome, and is involved in E site tRNA release. Functionally, protein L1 is also a translational repressor protein, it controls the translation of the L11 operon by binding to its mRNA. In Saccharophagus degradans (strain 2-40 / ATCC 43961 / DSM 17024), this protein is Large ribosomal subunit protein uL1.